Here is a 492-residue protein sequence, read N- to C-terminus: Fumarate hydratase 1, mitochondrial (492 aa).

The transit peptide at 1-28 directs the protein to the mitochondrion; that stretch reads MSIYVASRRLSGGTTVTALRYATSLRSY. Substrate contacts are provided by residues 127–129, 157–160, 167–169, and threonine 215; these read SGT, HPND, and SSN. The active-site Proton donor/acceptor is the histidine 216. Serine 346 is an active-site residue. Substrate-binding positions include serine 347 and 352–354; that span reads KVN.

This sequence belongs to the class-II fumarase/aspartase family. Fumarase subfamily. Homotetramer.

The protein resides in the mitochondrion. The enzyme catalyses (S)-malate = fumarate + H2O. Its pathway is carbohydrate metabolism; tricarboxylic acid cycle; (S)-malate from fumarate: step 1/1. Its activity is regulated as follows. Fumarate hydratase activity (fumarate to L-malate) is strongly inhibited by phosphoenolpyruvate, citrate, oxaloacetate, ATP and ADP. Malate dehydratase activity (malate to fumarate) is activated by oxaloacetate, pyruvate, Asn and Gln. Malate dehydratase activity (malate to fumarate) is inhibited by citrate, succinate, ADP, ATP, glucose-6P and phosphoenolpyruvate. Functionally, catalyzes the reversible stereospecific interconversion of fumarate to L-malate. Catalyzes the hydration of fumarate to L-malate in the tricarboxylic acid (TCA) cycle to facilitate a transition step in the production of energy in the form of NADH. This Arabidopsis thaliana (Mouse-ear cress) protein is Fumarate hydratase 1, mitochondrial.